Consider the following 542-residue polypeptide: Isocitrate lyase (542 aa).

102–104 contacts substrate; that stretch reads SGW. Asp170 contacts Mg(2+). The active-site Proton acceptor is the Cys208. Residues 209–210, Arg245, 428–432, and Thr462 each bind substrate; these read GH and NLSPS.

This sequence belongs to the isocitrate lyase/PEP mutase superfamily. Isocitrate lyase family. As to quaternary structure, homotetramer. Requires Mg(2+) as cofactor.

The protein resides in the glyoxysome. It carries out the reaction D-threo-isocitrate = glyoxylate + succinate. It catalyses the reaction (2S,3R)-3-hydroxybutane-1,2,3-tricarboxylate = pyruvate + succinate. The protein operates within carbohydrate metabolism; glyoxylate cycle; (S)-malate from isocitrate: step 1/2. In terms of biological role, catalyzes the formation of succinate and glyoxylate from isocitrate, a key step of the glyoxylate cycle, which operates as an anaplerotic route for replenishing the tricarboxylic acid cycle. Required for growth on ethanol or acetate, but dispensable when fermentable carbon sources are available. Also acts on 2-methylisocitrate. The polypeptide is Isocitrate lyase (Kluyveromyces lactis (strain ATCC 8585 / CBS 2359 / DSM 70799 / NBRC 1267 / NRRL Y-1140 / WM37) (Yeast)).